The primary structure comprises 181 residues: Protein Syd (181 aa).

This sequence belongs to the Syd family.

It is found in the cell inner membrane. In terms of biological role, interacts with the SecY protein in vivo. May bind preferentially to an uncomplexed state of SecY, thus functioning either as a chelating agent for excess SecY in the cell or as a regulatory factor that negatively controls the translocase function. In Salmonella arizonae (strain ATCC BAA-731 / CDC346-86 / RSK2980), this protein is Protein Syd.